A 181-amino-acid chain; its full sequence is Small ribosomal subunit protein uS4 (181 aa).

The 73-residue stretch at R108 to R180 folds into the S4 RNA-binding domain.

Belongs to the universal ribosomal protein uS4 family. As to quaternary structure, part of the 30S ribosomal subunit. Contacts protein S5. The interaction surface between S4 and S5 is involved in control of translational fidelity.

One of the primary rRNA binding proteins, it binds directly to 16S rRNA where it nucleates assembly of the body of the 30S subunit. Its function is as follows. With S5 and S12 plays an important role in translational accuracy. The protein is Small ribosomal subunit protein uS4 of Methanocorpusculum labreanum (strain ATCC 43576 / DSM 4855 / Z).